A 253-amino-acid polypeptide reads, in one-letter code: Sulfate transporter CysZ (253 aa).

4 helical membrane-spanning segments follow: residues Phe31–Phe51, Leu75–Ile95, Ile151–Trp171, and Ile222–Val242.

The protein belongs to the CysZ family.

The protein resides in the cell inner membrane. Its function is as follows. High affinity, high specificity proton-dependent sulfate transporter, which mediates sulfate uptake. Provides the sulfur source for the cysteine synthesis pathway. This chain is Sulfate transporter CysZ, found in Shigella flexneri.